The sequence spans 794 residues: uncharacterized protein (794 aa).

The signal sequence occupies residues 1-22; it reads MKLKYGTIIFSGLLGVSAILAA. Cys23 is lipidated: N-palmitoyl cysteine. Cys23 carries S-diacylglycerol cysteine lipidation. A compositionally biased stretch (polar residues) spans 177–196; that stretch reads SSGKTQVSQTSSGSNQQKTL. Disordered stretches follow at residues 177 to 208, 220 to 257, and 466 to 506; these read SSGK…SDSS, AKNN…DKKI, and KSTD…ENNS. Positions 220-231 are enriched in low complexity; sequence AKNNGKKANNSK. Positions 238 to 250 are enriched in polar residues; sequence DQSTQTHNDQGDA.

It belongs to the MG185/MG260 family.

The protein resides in the cell membrane. This is an uncharacterized protein from Mycoplasma pneumoniae (strain ATCC 29342 / M129 / Subtype 1) (Mycoplasmoides pneumoniae).